A 436-amino-acid chain; its full sequence is 3-ketoacyl-CoA thiolase (436 aa).

The Acyl-thioester intermediate role is filled by C99. Catalysis depends on proton acceptor residues H392 and C422.

The protein belongs to the thiolase-like superfamily. Thiolase family. Heterotetramer of two alpha chains (FadJ) and two beta chains (FadI).

Its subcellular location is the cytoplasm. It carries out the reaction an acyl-CoA + acetyl-CoA = a 3-oxoacyl-CoA + CoA. It participates in lipid metabolism; fatty acid beta-oxidation. In terms of biological role, catalyzes the final step of fatty acid oxidation in which acetyl-CoA is released and the CoA ester of a fatty acid two carbons shorter is formed. This is 3-ketoacyl-CoA thiolase from Escherichia coli (strain K12 / MC4100 / BW2952).